Reading from the N-terminus, the 68-residue chain is Large ribosomal subunit protein uL30 (68 aa).

The protein belongs to the universal ribosomal protein uL30 family. In terms of assembly, part of the 50S ribosomal subunit.

The sequence is that of Large ribosomal subunit protein uL30 from Kocuria rhizophila (strain ATCC 9341 / DSM 348 / NBRC 103217 / DC2201).